Consider the following 268-residue polypeptide: MNTTHVPEPHRTEQHTENLQHWRKILGIAPIVSIAFPAIMYFIFTKDSFEDSLFLRFITILLSFSYSAVQYAVLLHTNWKSHNKPEGILHTTLYYTLNLLLLAFSIISILSITTLPINKWKNDGGPILFSIFLPPLFMSPAYLLSTSCRLVPGQIGFTDTGINVLIDILTLLCSVGSLLLILEESEYCYCFAIISSILILIRLLGEKLSPEKQSPPPTAPWRIAVFVLILIFAALIYAFMMWVSIDILSDHFDLLTKARSTSVSKPGQ.

The protein belongs to the UPF0328 family.

The chain is UPF0328 protein ECU03_0040 from Encephalitozoon cuniculi (strain GB-M1) (Microsporidian parasite).